Here is a 149-residue protein sequence, read N- to C-terminus: uncharacterized protein (149 aa).

This is an uncharacterized protein from Archaeoglobus fulgidus (strain ATCC 49558 / DSM 4304 / JCM 9628 / NBRC 100126 / VC-16).